A 181-amino-acid polypeptide reads, in one-letter code: Adenine phosphoribosyltransferase (181 aa).

It belongs to the purine/pyrimidine phosphoribosyltransferase family. In terms of assembly, homodimer.

It is found in the cytoplasm. It catalyses the reaction AMP + diphosphate = 5-phospho-alpha-D-ribose 1-diphosphate + adenine. Its pathway is purine metabolism; AMP biosynthesis via salvage pathway; AMP from adenine: step 1/1. In terms of biological role, catalyzes a salvage reaction resulting in the formation of AMP, that is energically less costly than de novo synthesis. The polypeptide is Adenine phosphoribosyltransferase (Aeromonas salmonicida (strain A449)).